The sequence spans 364 residues: Coproporphyrin III ferrochelatase (364 aa).

Fe-coproporphyrin III-binding residues include Arg-29 and Tyr-118. Fe(2+) contacts are provided by His-169 and Glu-250.

The protein belongs to the ferrochelatase family.

Its subcellular location is the cytoplasm. It catalyses the reaction Fe-coproporphyrin III + 2 H(+) = coproporphyrin III + Fe(2+). It participates in porphyrin-containing compound metabolism; protoheme biosynthesis. In terms of biological role, involved in coproporphyrin-dependent heme b biosynthesis. Catalyzes the insertion of ferrous iron into coproporphyrin III to form Fe-coproporphyrin III. The polypeptide is Coproporphyrin III ferrochelatase (Streptococcus pneumoniae (strain ATCC 700669 / Spain 23F-1)).